We begin with the raw amino-acid sequence, 1087 residues long: MGTGDFICISMTGGAPWGFRLQGGKEEQQPLQVAKIRSQSKASGSGLREGDEVVSINGNPCADLTYPEVIKLMEGITDSLHLLVKRPSSGTSETLDSESETTNHQHLTHEGPMESTTLQIQQATETQSEDFFLAPVQTKVPLTEDQSNAWGYAECPKEEQAPPMLGSQEGHLVEEVILRQKAEAGQPGHVVELQLSLSKERHQCTSGPIVTLQGNDKSTSPDPDWSSQLERTVHINSIPAPEKADTSLTSSTSSGRELRVIQGRDPGGAGLPQVEVILDCSDRLKAEECRLQTGRGCVASPVEGGRSEAPPSLVSFAVSSEGTEHGEDQRSGKDQSRPHKHRARHARLRRSESLSEKQVKEAKSKCKSIALLLTDAPNPNSKGVLMFKKRRRRARKYTLVSYGTGELEREEEEEEDQEAGDKDEISEVAFLGTSESEVDEELLSDVDDNTQVVNFDWDSGLVDIEKRLNRGDKMEMLPDTTGKGALMFAKRRERMEQFTAQNEEEKTGGMAGGGPDALQTDGLRTMTSYQRKEESVRMQSSVSESSFQMGRSLASVPQQNGFSGVSETAGAQRMFPMNRTAKPFLGSMNQPAAPFSPTRSVTSPISDFPAPPPYSAVSPPPEAFSRGVSSPVAGPAQPPPWPQPAPWSQPAFYDSSEQIASRDERIAVPAKRTGILQEAKRRGTTKPMFTFKETKVSPNPELLSLLQNAEGKRGTGGDSGPEEDYLSLGAEACNFMQSSAKQKTPPPVAPKPAVKSPSSSQPVAPVSPVWSPGVAPAQRPAFSTSNPPNPPQVTAVSSIKIAQPAAPPARPASALNLAGPFKGPQAVVVSHNYTPKPSAPTPLVNAAPAGAGGPSNELPGMSGKGAQLFAKRQSRMEKYVVDSDTVQAHTVRAQSPTPSLPASWKYSSNVRAPPPVAYNPIHSPSYPLAAIKSQPPGAQASKTSKKKGKKPLNTLDVMKHQPYQLNASLFTFQPPDSKDGLPQKSTVKVSSAPAMKQALPPRQANVGSPTNAQASSVYSVPAYTSQPNFFAAEATSPVSASPVPVSVPTSPKQESTSTSYFVAPRPKFSAKKSGVTVQVWKPSVVEE.

A PDZ domain is found at 6 to 88 (FICISMTGGA…SLHLLVKRPS (83 aa)). Disordered regions lie at residues 24-52 (GKEEQQPLQVAKIRSQSKASGSGLREGDE), 88-112 (SSGTSETLDSESETTNHQHLTHEGP), and 207-272 (GPIV…AGLP). The segment covering 101 to 112 (TTNHQHLTHEGP) has biased composition (basic and acidic residues). Composition is skewed to polar residues over residues 207–230 (GPIVTLQGNDKSTSPDPDWSSQLE) and 246–255 (TSLTSSTSSG). 3 positions are modified to phosphoserine: Ser300, Ser319, and Ser320. The segment at 320–359 (SEGTEHGEDQRSGKDQSRPHKHRARHARLRRSESLSEKQV) is disordered. A compositionally biased stretch (basic and acidic residues) spans 322–337 (GTEHGEDQRSGKDQSR). Thr323 carries the phosphothreonine modification. Positions 338-348 (PHKHRARHARL) are enriched in basic residues. Residues 349–359 (RRSESLSEKQV) show a composition bias toward basic and acidic residues. The short motif at 388–396 (KKRRRRARK) is the Nuclear localization signal element. Residues Ser540, Ser541, Ser543, and Ser546 each carry the phosphoserine modification. An interaction with YWHAB region spans residues 551–557 (RSLASVP). Ser555 carries the post-translational modification Phosphoserine; by PKA. Disordered stretches follow at residues 581–817 (AKPF…ALNL) and 832–863 (NYTPKPSAPTPLVNAAPAGAGGPSNELPGMSG). Ser596 carries the phosphoserine modification. Residues 599–804 (RSVTSPISDF…AVSSIKIAQP (206 aa)) are interaction with YWHAB. Thr602 bears the Phosphothreonine; by PKA and CaMK2 mark. The residue at position 603 (Ser603) is a Phosphoserine. Pro residues-rich tracts occupy residues 609-622 (PAPPPYSAVSPPPE) and 636-647 (AQPPPWPQPAPW). The short motif at 611-614 (PPPY) is the PPPY motif element. Tyr614 is modified (phosphotyrosine). A Phosphoserine modification is found at Ser618. The segment at 656-796 (SEQIASRDER…PPNPPQVTAV (141 aa)) is F-actin binding. The tract at residues 656–909 (SEQIASRDER…LPASWKYSSN (254 aa)) is F-actin bundling activity. Interaction with ACTN2 regions lie at residues 656 to 917 (SEQI…PPVA) and 894 to 1087 (QSPT…VVEE). A phosphoserine mark is found at Ser697 and Ser719. An actin binding region spans residues 740–893 (AKQKTPPPVA…DTVQAHTVRA (154 aa)). At Thr744 the chain carries Phosphothreonine. Residues 751-777 (KPAVKSPSSSQPVAPVSPVWSPGVAPA) show a composition bias toward low complexity. A phosphoserine mark is found at Ser767 and Ser771. A compositionally biased stretch (polar residues) spans 781-797 (AFSTSNPPNPPQVTAVS). Residues 803–1087 (QPAAPPARPA…QVWKPSVVEE (285 aa)) are interaction with FLNC. A phosphoserine mark is found at Ser895, Ser899, and Ser903. Disordered regions lie at residues 930–952 (AIKSQPPGAQASKTSKKKGKKPL), 970–1012 (FTFQ…PTNA), and 1037–1060 (PVSASPVPVSVPTSPKQESTSTSY). Residues 993–1012 (PAMKQALPPRQANVGSPTNA) form an interaction with ZYX region. Ser1008 and Ser1050 each carry phosphoserine. Over residues 1037 to 1051 (PVSASPVPVSVPTSP) the composition is skewed to low complexity.

This sequence belongs to the synaptopodin family. May self-associate in muscle cells under oxidative stress. Binds F-actin. Interacts with ACTN2; ACTN2 is proposed to anchor SYOP2 at Z lines in mature myocytes. Interacts with AKAP6, PPP3CA and CAMK2A. Interacts (phosphorylated form) with YWHAB; YWHAB competes with ACTN2 for interaction with SYNPO2. Interacts with KPNA2; mediating nuclear import of SYNOP2; dependent on interaction with YWHAB. Interacts with IPO13; may be implicated in SYNOP2 nuclear import. Interacts with ZYX, FLNC, ILK. Interacts with BAG3 (via WW 1 domain). May associate with the CASA complex consisting of HSPA8, HSPB8 and BAG3. Interacts with VPS18. In terms of processing, phosphorylated by PKA, and by CaMK2 at multiple sites. Dephosphorylated by calcineurin at Ser-555 and Thr-602; abrogating interaction with YWHAB and impairing nuclear import. As to expression, expressed in skeletal muscle, heart, colon, stomach, uterus and lung. Expression is restricted to muscle cell layers in colon, uterus and stomach.

It localises to the nucleus. It is found in the cytoplasm. The protein resides in the myofibril. The protein localises to the sarcomere. Its subcellular location is the z line. It localises to the cell junction. It is found in the focal adhesion. Functionally, has an actin-binding and actin-bundling activity. Can induce the formation of F-actin networks. At the sarcomeric Z lines is proposed to act as adapter protein that links nascent myofibers to the sarcolemma via ZYX and may play a role in early assembly and stabilization of the Z lines. Involved in autophagosome formation. May play a role in chaperone-assisted selective autophagy (CASA) involved in Z lines maintenance in striated muscle under mechanical tension; may link the client-processing CASA chaperone machinery to a membrane-tethering and fusion complex providing autophagosome membranes. Involved in regulation of cell migration. May be a tumor suppressor. This chain is Synaptopodin-2 (Synpo2), found in Mus musculus (Mouse).